A 409-amino-acid polypeptide reads, in one-letter code: Isovaleryl-CoA dehydrogenase, mitochondrial (409 aa).

Residues 1-22 (MAAAQRWLPGILRRGDGLARRL) constitute a mitochondrion transit peptide. Residues 151 to 160 (LAMSEPNSGS) and 184 to 186 (WCT) each bind FAD. Residue Ser-160 participates in substrate binding. Residues 206–207 (SK), Tyr-261, and 268–271 (DLER) each bind substrate. The Proton acceptor role is filled by Glu-270. FAD-binding positions include Arg-296, Gln-307, and 364-368 (QCLGG). 391–392 (AG) is a substrate binding site. 393–395 (TSE) serves as a coordination point for FAD.

It belongs to the acyl-CoA dehydrogenase family. In terms of assembly, homodimer. Requires FAD as cofactor.

Its subcellular location is the mitochondrion. It carries out the reaction 3-methylbutanoyl-CoA + oxidized [electron-transfer flavoprotein] + H(+) = 3-methylbut-2-enoyl-CoA + reduced [electron-transfer flavoprotein]. The protein operates within amino-acid degradation; L-leucine degradation; (S)-3-hydroxy-3-methylglutaryl-CoA from 3-isovaleryl-CoA: step 1/3. The chain is Isovaleryl-CoA dehydrogenase, mitochondrial from Oryza sativa subsp. japonica (Rice).